The sequence spans 1413 residues: Leucine-rich repeat receptor protein kinase MSL1 (1413 aa).

The first 23 residues, 1–23, serve as a signal peptide directing secretion; the sequence is MAPMLSIASRSPSPALIAPHASA. 2 N-linked (GlcNAc...) asparagine glycosylation sites follow: N153 and N192. 29 LRR repeats span residues 185–209, 210–233, 235–257, 258–281, 282–304, 306–329, 330–353, 354–377, 379–401, 402–425, 427–449, 450–473, 475–497, 498–518, 519–542, 543–565, 567–589, 590–613, 615–636, 637–661, 662–685, 687–709, 710–733, 745–769, 771–793, 794–817, 818–841, 843–866, and 868–890; these read FQSL…MVNL, QHLQ…LFDL, MLKV…IAHL, QQLT…LGSL, KNLE…SFSN, SRLL…IRAL, VNLV…LCQL, KNLQ…IGNL, QLEV…IGNL, EILE…VGEL, NLRQ…LGNC, KKLT…LADL, AVVL…IQNW, SNVS…PGLP, LHLV…ICQG, TFLQ…TFKG, KNLT…YLAL, LPLV…LWES, TILD…SIGK, LLSL…IGAL, RNLT…LFNC, NLVT…ISHL, TKLN…LCVA, VQHI…INNC, ILVE…LAEL, RNIT…PVPL, ASLQ…IGNI, PQIT…LLCK, and SLNH…CHED. N-linked (GlcNAc...) asparagine glycans are attached at residues N304 and N317. Residues N461, N496, and N499 are each glycosylated (N-linked (GlcNAc...) asparagine). N-linked (GlcNAc...) asparagine glycans are attached at residues N554, N568, and N601. 2 N-linked (GlcNAc...) asparagine glycosylation sites follow: N663 and N697. Residue N768 is glycosylated (N-linked (GlcNAc...) asparagine). A glycan (N-linked (GlcNAc...) asparagine) is linked at N795. Residues N878, N901, N917, and N928 are each glycosylated (N-linked (GlcNAc...) asparagine). 2 LRR repeats span residues 918-942 and 944-966; these read FTKL…IARV and SLYY…ICGM. The N-linked (GlcNAc...) asparagine glycan is linked to N973. Residues 1016–1036 form a helical membrane-spanning segment; it reads TICCIATAIVIVLVVILVVYL. One can recognise a Protein kinase domain in the interval 1107–1401; sequence FDGMHVVGDG…IEAMEYGPLV (295 aa). ATP-binding positions include 1113 to 1121 and K1135; that span reads VGDGGFGTV. The active-site Proton acceptor is the D1234.

It belongs to the protein kinase superfamily. Ser/Thr protein kinase family. In terms of tissue distribution, expressed in roots, leaves, shoots and spikelets.

It is found in the cell membrane. It catalyses the reaction L-seryl-[protein] + ATP = O-phospho-L-seryl-[protein] + ADP + H(+). The catalysed reaction is L-threonyl-[protein] + ATP = O-phospho-L-threonyl-[protein] + ADP + H(+). Receptor-like kinase that may play a role male and female sporogenesis. The sequence is that of Leucine-rich repeat receptor protein kinase MSL1 from Oryza sativa subsp. japonica (Rice).